A 141-amino-acid chain; its full sequence is Galactose-6-phosphate isomerase subunit LacA 1 (141 aa).

It belongs to the LacAB/RpiB family. As to quaternary structure, heteromultimeric protein consisting of LacA and LacB.

The catalysed reaction is aldehydo-D-galactose 6-phosphate = keto-D-tagatose 6-phosphate. It functions in the pathway carbohydrate metabolism; D-galactose 6-phosphate degradation; D-tagatose 6-phosphate from D-galactose 6-phosphate: step 1/1. In Streptococcus agalactiae serotype III (strain NEM316), this protein is Galactose-6-phosphate isomerase subunit LacA 1.